The sequence spans 606 residues: Endonuclease 8-like 3 (606 aa).

The active-site Schiff-base intermediate with DNA; via amino nitrogen is the valine 2. Residues 31-51 (ALQGLGGPGSPPAAPGPMGTS) form a disordered region. Residues asparagine 194 and arginine 273 each coordinate DNA. Residues 249–283 (KVYKRPNCGQCCCKITVCRLGENNRMTYFCPHCQK) form an FPG-type zinc finger. The RanBP2-type zinc-finger motif lies at 319-348 (SEEQWTCEVCTLINKLSSKTCDACLTSRPA). At serine 451 the chain carries Phosphoserine. Zn(2+) contacts are provided by cysteine 508, histidine 511, cysteine 534, cysteine 542, cysteine 555, histidine 557, cysteine 580, and cysteine 588. GRF-type zinc fingers lie at residues 508–551 (CSKH…ADLS) and 555–597 (CNHG…AQNG).

This sequence belongs to the FPG family.

The protein localises to the nucleus. It is found in the chromosome. It catalyses the reaction 2'-deoxyribonucleotide-(2'-deoxyribose 5'-phosphate)-2'-deoxyribonucleotide-DNA = a 3'-end 2'-deoxyribonucleotide-(2,3-dehydro-2,3-deoxyribose 5'-phosphate)-DNA + a 5'-end 5'-phospho-2'-deoxyribonucleoside-DNA + H(+). In terms of biological role, DNA glycosylase which prefers single-stranded DNA (ssDNA), or partially ssDNA structures such as bubble and fork structures, to double-stranded DNA (dsDNA). Mediates interstrand cross-link repair in response to replication stress: acts by mediating DNA glycosylase activity, cleaving one of the two N-glycosyl bonds comprising the interstrand cross-link, which avoids the formation of a double-strand break but generates an abasic site that is bypassed by translesion synthesis polymerases. In vitro, displays strong glycosylase activity towards the hydantoin lesions spiroiminodihydantoin (Sp) and guanidinohydantoin (Gh) in both ssDNA and dsDNA; also recognizes FapyA, FapyG, 5-OHU, 5-OHC, 5-OHMH, Tg and 8-oxoA lesions in ssDNA. No activity on 8-oxoG detected. Also shows weak DNA-(apurinic or apyrimidinic site) lyase activity. In vivo, appears to be the primary enzyme involved in removing Sp and Gh from ssDNA in neonatal tissues. This chain is Endonuclease 8-like 3 (NEIL3), found in Bos taurus (Bovine).